The sequence spans 142 residues: RNA polymerase-binding transcription factor DksA (142 aa).

Disordered regions lie at residues 1–20 (MQTA…EDEP), 51–70 (HLQK…SSET), and 119–142 (RPTA…HRDD). Residues 104–128 (CEETGEPIGLARLEARPTATMSVEA) form a dksA C4-type zinc finger. Positions 128–142 (AQERHERRERVHRDD) are enriched in basic and acidic residues.

Belongs to the DksA family. As to quaternary structure, interacts directly with the RNA polymerase.

Its subcellular location is the cytoplasm. Its function is as follows. Transcription factor that acts by binding directly to the RNA polymerase (RNAP). Required for negative regulation of rRNA expression and positive regulation of several amino acid biosynthesis promoters. The polypeptide is RNA polymerase-binding transcription factor DksA (Caulobacter vibrioides (strain ATCC 19089 / CIP 103742 / CB 15) (Caulobacter crescentus)).